The primary structure comprises 131 residues: Large ribosomal subunit protein uL14m (131 aa).

It belongs to the universal ribosomal protein uL14 family. As to quaternary structure, component of the mitochondrial large ribosomal subunit (mt-LSU). Mature N.crassa 74S mitochondrial ribosomes consist of a small (37S) and a large (54S) subunit. The 37S small subunit contains a 16S ribosomal RNA (16S mt-rRNA) and 32 different proteins. The 54S large subunit contains a 23S rRNA (23S mt-rRNA) and 42 different proteins.

It localises to the mitochondrion. In terms of biological role, component of the mitochondrial ribosome (mitoribosome), a dedicated translation machinery responsible for the synthesis of mitochondrial genome-encoded proteins, including at least some of the essential transmembrane subunits of the mitochondrial respiratory chain. The mitoribosomes are attached to the mitochondrial inner membrane and translation products are cotranslationally integrated into the membrane. The protein is Large ribosomal subunit protein uL14m (mrpl38) of Neurospora crassa (strain ATCC 24698 / 74-OR23-1A / CBS 708.71 / DSM 1257 / FGSC 987).